The primary structure comprises 791 residues: Probable potassium transporter 11 (791 aa).

Topologically, residues 1–49 are cytoplasmic; sequence MASLSESEGTNRGSMWELDQNLDQPMDEEASRLKNMYREKKFSSLLLLR. A helical transmembrane segment spans residues 50-70; it reads LAFQSLGVVFGDLGTSPLYVF. Residues 71–87 are Extracellular-facing; that stretch reads YNAFPHGVDDEEDVIGA. The chain crosses the membrane as a helical span at residues 88–108; it reads LSLIIYTLTLIPLLKYVFVVL. Over 109–175 the chain is Cytoplasmic; that stretch reads RANDNGQGGT…EAHAYKRNCL (67 aa). The chain crosses the membrane as a helical span at residues 176–196; it reads LIVVLIGTCTAIGDGILTPAI. Over 197–215 the chain is Extracellular; sequence SVLSASGGIKVQNPNMSTD. N211 carries an N-linked (GlcNAc...) asparagine glycan. A helical membrane pass occupies residues 216 to 236; sequence VVVIVSVIILIGLFSMQHYGT. At 237–238 the chain is on the cytoplasmic side; it reads DK. A helical membrane pass occupies residues 239 to 259; sequence VGWLFAPIVLLWFILIGSVGA. Over 260–289 the chain is Extracellular; that stretch reads LNIHKYKGSVLKAYNPVYIYRYFQRRNSDS. The helical transmembrane segment at 290–310 threads the bilayer; that stretch reads WASLGGIMLSITGTEALFADL. The Cytoplasmic segment spans residues 311–315; the sequence is CHFPV. The helical transmembrane segment at 316 to 338 threads the bilayer; sequence FAIQIAFTLIVFPCLLLAYTGQA. Residues 339-359 are Extracellular-facing; that stretch reads AYIIAHKDHVADAFYRSIPDS. A helical transmembrane segment spans residues 360-380; it reads IYWPAFVIATAAAIVASQATI. Residues 381–411 are Cytoplasmic-facing; sequence SATYSIIKQALALGCFPRVKIVHTSKKFLGQ. A helical transmembrane segment spans residues 412 to 432; that stretch reads IYIPDINWVLLILCIAVTAGF. Residues 433–444 are Extracellular-facing; that stretch reads KNQSQIGNAYGT. The N-linked (GlcNAc...) asparagine glycan is linked to N434. Residues 445-465 form a helical membrane-spanning segment; that stretch reads AVVIVMLVTTFLMVPIMLLVW. Over 466-468 the chain is Cytoplasmic; it reads KSH. Residues 469–489 traverse the membrane as a helical segment; the sequence is WILVVTFIVLSLMVEIPYFSA. The Extracellular portion of the chain corresponds to 490–496; sequence CLLKIDQ. The chain crosses the membrane as a helical span at residues 497 to 517; it reads GGWVPLVIATAFFIIMYVWHF. Residues 518 to 791 lie on the Cytoplasmic side of the membrane; the sequence is CTVKRYEFEM…LLNVGQIYYI (274 aa).

It belongs to the HAK/KUP transporter (TC 2.A.72.3) family.

The protein localises to the membrane. In terms of biological role, high-affinity potassium transporter. The chain is Probable potassium transporter 11 from Oryza sativa subsp. japonica (Rice).